Reading from the N-terminus, the 762-residue chain is Multifunctional tryptophan biosynthesis protein (762 aa).

Residues 25–224 (NLILIDNYDS…LHMQGGTWAE (200 aa)) form the Glutamine amidotransferase type-1 domain. 76–78 (GPG) is a binding site for L-glutamine. Cys-104 serves as the catalytic Nucleophile; for GATase activity. L-glutamine is bound by residues Gln-108 and 154-155 (SL). Active-site for GATase activity residues include His-198 and Glu-200. Residues 251 to 515 (ILQKIYAHRK…DATQFIRELC (265 aa)) are indole-3-glycerol phosphate synthase. The N-(5'-phosphoribosyl)anthranilate isomerase stretch occupies residues 531-762 (LVKICGTRSA…EFVKAAKSVR (232 aa)).

As to quaternary structure, tetramer of two components I and two components II.

The enzyme catalyses chorismate + L-glutamine = anthranilate + pyruvate + L-glutamate + H(+). It catalyses the reaction N-(5-phospho-beta-D-ribosyl)anthranilate = 1-(2-carboxyphenylamino)-1-deoxy-D-ribulose 5-phosphate. The catalysed reaction is 1-(2-carboxyphenylamino)-1-deoxy-D-ribulose 5-phosphate + H(+) = (1S,2R)-1-C-(indol-3-yl)glycerol 3-phosphate + CO2 + H2O. It functions in the pathway amino-acid biosynthesis; L-tryptophan biosynthesis; L-tryptophan from chorismate: step 1/5. The protein operates within amino-acid biosynthesis; L-tryptophan biosynthesis; L-tryptophan from chorismate: step 3/5. It participates in amino-acid biosynthesis; L-tryptophan biosynthesis; L-tryptophan from chorismate: step 4/5. In terms of biological role, trifunctional enzyme bearing the Gln amidotransferase (GATase) domain of anthranilate synthase, indole-glycerolphosphate synthase, and phosphoribosylanthranilate isomerase activities. The polypeptide is Multifunctional tryptophan biosynthesis protein (trp-1) (Neurospora crassa (strain ATCC 24698 / 74-OR23-1A / CBS 708.71 / DSM 1257 / FGSC 987)).